The following is a 618-amino-acid chain: Syncytin-B (618 aa).

The signal sequence occupies residues 1–17 (MTGFWVLCFVLFPSSLS). At 18-545 (YPESWMPLVN…SWGQWPDLGR (528 aa)) the chain is on the extracellular side. Asn27 carries an N-linked (GlcNAc...) asparagine glycan. The CXXC signature appears at 44–47 (CWVC). Intrachain disulfides connect Cys44–Cys47, Cys44–Cys507, and Cys499–Cys506. Residues Asn184, Asn274, and Asn357 are each glycosylated (N-linked (GlcNAc...) asparagine). Residues 422-442 (LFPFLAGLGISSALGTGIAGL) form a fusion peptide region. The interval 482–498 (LQNRRALDLITAEKGGT) is immunosuppression. Residues 499–507 (CLFLQEECC) carry the CX6CC motif. Residues 546–566 (WLPWLTPFLGPLLFLFFLLTF) traverse the membrane as a helical segment. At 567 to 618 (GSCLLNCLTRFVSQRLGSFVQDTAKRHVDSILQNFQYKKLPQDSPDEDTIPT) the chain is on the cytoplasmic side.

Belongs to the gamma type-C retroviral envelope protein family. In terms of assembly, the mature protein consists of a trimer of SU-TM heterodimers. The SU-TM heterodimers are attached by a labile interchain disulfide bond. In terms of processing, synthesized as an inactive precursor that is heavily N-glycosylated and processed likely by furin in the Golgi to yield the mature SU and TM proteins. The cleavage site between SU and TM requires the minimal sequence [KR]-X-[KR]-R. The CXXC motif is highly conserved across a broad range of retroviral envelope proteins. It is thought to participate in the formation of a labile disulfide bond possibly with the CX6CC motif present in the transmembrane protein. Isomerization of the intersubunit disulfide bond to an SU intrachain disulfide bond is thought to occur upon receptor recognition in order to allow membrane fusion. In terms of tissue distribution, highly expressed in placenta where it localizes to syncytiotrophoblasts of the labyrinthine zona. Specifically localizes to syncytiotrophoblast layer II (SynT-II). Also detected at very low levels in ovary.

It is found in the cell membrane. Functionally, this endogenous retroviral envelope protein has retained its original fusogenic properties. Together with Syna, participates in trophoblast fusion and the formation of a syncytium during placenta morphogenesis. Synb is specifically involved in formation of syncytiotrophoblast layer II (SynT-II). Promotes myoblast fusion, and may play a role in regeneration of damaged muscle tissue in males. May have immunosuppressive activity. This Mus musculus (Mouse) protein is Syncytin-B.